We begin with the raw amino-acid sequence, 221 residues long: Ras-related protein Rab-28 (221 aa).

S2 carries the N-acetylserine modification. Phosphoserine is present on S8. Residues G21, G24, K25, T26, S27, G38, K39, Y41, and T44 each coordinate GTP. Residue T26 participates in Mg(2+) binding. Residues 35-49 (ETFGKQYKQTIGLDF) form a switch I region. Mg(2+) contacts are provided by T44 and D68. Residues 68 to 85 (DIGGQTIGGKMLDKYIYG) are switch II. Positions 71, 129, 130, 132, 160, and 161 each coordinate GTP. Residue C218 is modified to Cysteine methyl ester. A lipid anchor (S-farnesyl cysteine) is attached at C218. Positions 219–221 (AVQ) are cleaved as a propeptide — removed in mature form.

It belongs to the small GTPase superfamily. Rab family. Interacts (prenylated form) with PDE6D; the interaction promotes RAB28 delivery to the photoreceptor outer segments. Interacts with KCNJ13; the interaction may facilitate cone outer segments phagocytosis. Interacts with RELA; the interaction contributes to RELA transport from cytoplasm to nucleus. Mg(2+) serves as cofactor. Isoprenylated. Testis, brain, and to much lower levels heart, skeletal muscle and fat cells. Expressed in the retina.

Its subcellular location is the cell membrane. It localises to the cytoplasm. The protein resides in the cytoskeleton. The protein localises to the cilium basal body. It is found in the nucleus. The catalysed reaction is GTP + H2O = GDP + phosphate + H(+). Its activity is regulated as follows. Regulated by guanine nucleotide exchange factors (GEFs) which promote the exchange of bound GDP for free GTP. Regulated by GTPase activating proteins (GAPs) which increase the GTP hydrolysis activity. Inhibited by GDP dissociation inhibitors (GDIs). The small GTPases Rab are key regulators of intracellular membrane trafficking, from the formation of transport vesicles to their fusion with membranes. Rabs cycle between an inactive GDP-bound form and an active GTP-bound form that is able to recruit to membranes different sets of downstream effectors directly responsible for vesicle formation, movement, tethering and fusion. RAB28 is required for shedding and phagocytosis of cone cell outer segments (OS) discs in the retina. Also participates in nuclear factor kappa-B p65/RELA nuclear transport in endothelial cells. The sequence is that of Ras-related protein Rab-28 from Rattus norvegicus (Rat).